The following is a 655-amino-acid chain: p-hydroxybenzoic acid efflux pump subunit AaeB (655 aa).

The next 11 membrane-spanning stretches (helical) occupy residues 13–33 (FAVK…HFQL), 38–58 (WAVL…GGEP), 69–89 (LRII…IAMI), 93–113 (LLMI…SSLV), 121–141 (WGLA…EPLL), 152–172 (EIVI…PRSI), 370–390 (LFWL…IAVV), 407–427 (FIYG…VIIP), 431–451 (QSML…GIEV), 459–479 (MGAL…TFHF), and 482–502 (FLDS…VILL).

The protein belongs to the aromatic acid exporter ArAE (TC 2.A.85) family.

The protein localises to the cell inner membrane. Functionally, forms an efflux pump with AaeA. Could function as a metabolic relief valve, allowing to eliminate certain compounds when they accumulate to high levels in the cell. This Escherichia coli O7:K1 (strain IAI39 / ExPEC) protein is p-hydroxybenzoic acid efflux pump subunit AaeB.